Here is a 193-residue protein sequence, read N- to C-terminus: DNA damage-inducible transcript 4-like protein (193 aa).

The protein belongs to the DDIT4 family.

The protein resides in the cytoplasm. Its function is as follows. Inhibits cell growth by regulating the TOR signaling pathway upstream of the TSC1-TSC2 complex and downstream of AKT1. In Bos taurus (Bovine), this protein is DNA damage-inducible transcript 4-like protein (DDIT4L).